The sequence spans 645 residues: Beta-galactosidase BgaA (645 aa).

Arg-102 lines the substrate pocket. Position 106 (Cys-106) interacts with Zn(2+). A substrate-binding site is contributed by Asn-140. The active-site Proton donor is Glu-141. The Zn(2+) site is built by Cys-150, Cys-152, and Cys-155. The Nucleophile role is filled by Glu-312. Substrate-binding positions include Trp-320 and 360-363 (EQMH).

Belongs to the glycosyl hydrolase 42 family.

It carries out the reaction Hydrolysis of terminal non-reducing beta-D-galactose residues in beta-D-galactosides.. Hydrolyzes chromogen 5-bromo-4-chloro-3-indolyl-beta-D-galactopyranoside (X-Gal) and p-nitrophenyl-beta-D-galactoside (pNPGal). This is Beta-galactosidase BgaA from Thermus sp.